Reading from the N-terminus, the 155-residue chain is Endoribonuclease YbeY (155 aa).

Histidine 119, histidine 123, and histidine 129 together coordinate Zn(2+).

Belongs to the endoribonuclease YbeY family. Requires Zn(2+) as cofactor.

The protein resides in the cytoplasm. Single strand-specific metallo-endoribonuclease involved in late-stage 70S ribosome quality control and in maturation of the 3' terminus of the 16S rRNA. The polypeptide is Endoribonuclease YbeY (Mycoplasmopsis synoviae (strain 53) (Mycoplasma synoviae)).